We begin with the raw amino-acid sequence, 270 residues long: 4-hydroxy-tetrahydrodipicolinate reductase (270 aa).

Residues 9-14 and Glu-35 each bind NAD(+); that span reads GAGGRM. Arg-36 serves as a coordination point for NADP(+). Residues 99–101 and 123–126 contribute to the NAD(+) site; these read GTT and ASNF. Catalysis depends on His-156, which acts as the Proton donor/acceptor. His-157 provides a ligand contact to (S)-2,3,4,5-tetrahydrodipicolinate. Lys-160 functions as the Proton donor in the catalytic mechanism. Residue 166 to 167 coordinates (S)-2,3,4,5-tetrahydrodipicolinate; the sequence is GT.

It belongs to the DapB family.

It is found in the cytoplasm. The enzyme catalyses (S)-2,3,4,5-tetrahydrodipicolinate + NAD(+) + H2O = (2S,4S)-4-hydroxy-2,3,4,5-tetrahydrodipicolinate + NADH + H(+). It carries out the reaction (S)-2,3,4,5-tetrahydrodipicolinate + NADP(+) + H2O = (2S,4S)-4-hydroxy-2,3,4,5-tetrahydrodipicolinate + NADPH + H(+). It functions in the pathway amino-acid biosynthesis; L-lysine biosynthesis via DAP pathway; (S)-tetrahydrodipicolinate from L-aspartate: step 4/4. Catalyzes the conversion of 4-hydroxy-tetrahydrodipicolinate (HTPA) to tetrahydrodipicolinate. The chain is 4-hydroxy-tetrahydrodipicolinate reductase from Haemophilus influenzae (strain PittGG).